The following is a 135-amino-acid chain: Ribonuclease P protein component (135 aa).

It belongs to the RnpA family. In terms of assembly, consists of a catalytic RNA component (M1 or rnpB) and a protein subunit.

The enzyme catalyses Endonucleolytic cleavage of RNA, removing 5'-extranucleotides from tRNA precursor.. In terms of biological role, RNaseP catalyzes the removal of the 5'-leader sequence from pre-tRNA to produce the mature 5'-terminus. It can also cleave other RNA substrates such as 4.5S RNA. The protein component plays an auxiliary but essential role in vivo by binding to the 5'-leader sequence and broadening the substrate specificity of the ribozyme. This is Ribonuclease P protein component from Pseudomonas aeruginosa (strain ATCC 15692 / DSM 22644 / CIP 104116 / JCM 14847 / LMG 12228 / 1C / PRS 101 / PAO1).